Here is a 658-residue protein sequence, read N- to C-terminus: Exoribonuclease 2 (658 aa).

Residues 189–530 form the RNB domain; that stretch reads REDLTSLYFT…VNHRLIKQVL (342 aa). The region spanning 576–658 is the S1 motif domain; sequence AVEFDCEIAD…ETRSIVGNII (83 aa).

It belongs to the RNR ribonuclease family. RNase II subfamily.

The protein localises to the cytoplasm. It catalyses the reaction Exonucleolytic cleavage in the 3'- to 5'-direction to yield nucleoside 5'-phosphates.. In terms of biological role, involved in mRNA degradation. Hydrolyzes single-stranded polyribonucleotides processively in the 3' to 5' direction. This chain is Exoribonuclease 2, found in Actinobacillus pleuropneumoniae serotype 7 (strain AP76).